We begin with the raw amino-acid sequence, 882 residues long: Protein translocase subunit SecA (882 aa).

Residues glutamine 79, 97–101 (GEGKT), and aspartate 487 contribute to the ATP site.

It belongs to the SecA family.

Its subcellular location is the plastid. It localises to the chloroplast stroma. The protein localises to the chloroplast thylakoid membrane. The catalysed reaction is ATP + H2O + cellular proteinSide 1 = ADP + phosphate + cellular proteinSide 2.. Its function is as follows. Has a central role in coupling the hydrolysis of ATP to the transfer of proteins across the thylakoid membrane. The protein is Protein translocase subunit SecA of Gracilaria tenuistipitata var. liui (Red alga).